Reading from the N-terminus, the 55-residue chain is MPSSKKKKETVPVMSMAGLIRYYEEENEKVKISPKIVIGASLALTIIVIVITKLF.

Topologically, residues 1–33 are cytoplasmic; sequence MPSSKKKKETVPVMSMAGLIRYYEEENEKVKIS. The helical transmembrane segment at 34–53 threads the bilayer; it reads PKIVIGASLALTIIVIVITK. Residues 54–55 are Extracellular-facing; the sequence is LF.

The protein belongs to the SEC61-beta family. Component of the protein translocase complex. Heterotrimer consisting of alpha (SecY), beta (SecG) and gamma (SecE) subunits. Can form oligomers of the heterotrimer.

It is found in the cell membrane. Functionally, involved in protein export. The function of the beta subunit is unknown, but it may be involved in stabilization of the trimeric complex. The chain is Preprotein translocase subunit SecG (secG) from Saccharolobus solfataricus (strain ATCC 35092 / DSM 1617 / JCM 11322 / P2) (Sulfolobus solfataricus).